The chain runs to 282 residues: MPLNVTVEEETLQIVEEEPQQEITNTILEEDFNLLDNSFQTDISSTSSQNDSKFTCLLVRHAESEHNVRGIRAGARIDSELTVHGYNQAKKLAKSIRNLDIVCVYSSPQKRAKRTAEEITKVANCPLYISDFLMEKDLGSLEGTSFRYTANYRPREPPMKVTNLESRDSLLTRARGFTDILFNEAIGFEGESGKTIVVVSHGIFLPFLLRAILARARTPLPSMIIPWNNASYCLITIDLGGNSIVKMNCNSHLRGIKRTRKLGSSTYDSKQKPITEFCSKLN.

His-61 acts as the Tele-phosphohistidine intermediate in catalysis. The active-site Proton donor/acceptor is Glu-135.

It belongs to the phosphoglycerate mutase family. BPG-dependent PGAM subfamily.

It is found in the nucleus. The protein is Probable phosphatase C1620.13 of Schizosaccharomyces pombe (strain 972 / ATCC 24843) (Fission yeast).